The chain runs to 266 residues: Ribosomal RNA small subunit methyltransferase A (266 aa).

S-adenosyl-L-methionine-binding residues include N12, L14, G39, E61, D87, and N107.

This sequence belongs to the class I-like SAM-binding methyltransferase superfamily. rRNA adenine N(6)-methyltransferase family. RsmA subfamily.

The protein localises to the cytoplasm. The enzyme catalyses adenosine(1518)/adenosine(1519) in 16S rRNA + 4 S-adenosyl-L-methionine = N(6)-dimethyladenosine(1518)/N(6)-dimethyladenosine(1519) in 16S rRNA + 4 S-adenosyl-L-homocysteine + 4 H(+). Functionally, specifically dimethylates two adjacent adenosines (A1518 and A1519) in the loop of a conserved hairpin near the 3'-end of 16S rRNA in the 30S particle. May play a critical role in biogenesis of 30S subunits. This chain is Ribosomal RNA small subunit methyltransferase A, found in Nitratidesulfovibrio vulgaris (strain ATCC 29579 / DSM 644 / CCUG 34227 / NCIMB 8303 / VKM B-1760 / Hildenborough) (Desulfovibrio vulgaris).